The following is a 123-amino-acid chain: uncharacterized protein (123 aa).

An N-terminal signal peptide occupies residues 1–20 (MSPLIVGTLIIILLSGLATA). G96 is lipidated: GPI-anchor amidated glycine. A propeptide spans 97–123 (SSPTTKRVIYIVMILLVLITLAVNLKH) (removed in mature form).

It localises to the cell membrane. This is an uncharacterized protein from Schizosaccharomyces pombe (strain 972 / ATCC 24843) (Fission yeast).